Here is a 589-residue protein sequence, read N- to C-terminus: Pyruvate kinase (589 aa).

Position 32 (Arg32) interacts with substrate. The K(+) site is built by Asn34, Ser36, Asp66, and Thr67. Residue 34–37 (NFSH) coordinates ATP. Positions 73 and 157 each coordinate ATP. Residue Glu223 participates in Mg(2+) binding. Gly246, Asp247, and Thr279 together coordinate substrate. Asp247 serves as a coordination point for Mg(2+).

This sequence belongs to the pyruvate kinase family. It in the C-terminal section; belongs to the PEP-utilizing enzyme family. Homotetramer. It depends on Mg(2+) as a cofactor. The cofactor is K(+).

It carries out the reaction pyruvate + ATP = phosphoenolpyruvate + ADP + H(+). It participates in carbohydrate degradation; glycolysis; pyruvate from D-glyceraldehyde 3-phosphate: step 5/5. Its activity is regulated as follows. Strongly activated by glucose-6-phosphate, ribose-5-phosphate and fructose-6-phosphate. Weak activator AMP and weak inhibitor fructose-1,6-bisphosphate can act as strong inhibitors in the presence of strong activators. This chain is Pyruvate kinase (pyk), found in Lactobacillus delbrueckii subsp. bulgaricus.